Reading from the N-terminus, the 688-residue chain is Glycine--tRNA ligase beta subunit (688 aa).

It belongs to the class-II aminoacyl-tRNA synthetase family. Tetramer of two alpha and two beta subunits.

The protein localises to the cytoplasm. The enzyme catalyses tRNA(Gly) + glycine + ATP = glycyl-tRNA(Gly) + AMP + diphosphate. The polypeptide is Glycine--tRNA ligase beta subunit (Vibrio atlanticus (strain LGP32) (Vibrio splendidus (strain Mel32))).